Reading from the N-terminus, the 444-residue chain is Tubulin beta-9 chain (444 aa).

8 residues coordinate GTP: Gln11, Glu69, Ser138, Gly142, Thr143, Gly144, Asn204, and Asn226. Position 69 (Glu69) interacts with Mg(2+).

The protein belongs to the tubulin family. In terms of assembly, dimer of alpha and beta chains. A typical microtubule is a hollow water-filled tube with an outer diameter of 25 nm and an inner diameter of 15 nM. Alpha-beta heterodimers associate head-to-tail to form protofilaments running lengthwise along the microtubule wall with the beta-tubulin subunit facing the microtubule plus end conferring a structural polarity. Microtubules usually have 13 protofilaments but different protofilament numbers can be found in some organisms and specialized cells. Interacts with TFCA. Mg(2+) serves as cofactor.

It is found in the cytoplasm. The protein resides in the cytoskeleton. Functionally, tubulin is the major constituent of microtubules, a cylinder consisting of laterally associated linear protofilaments composed of alpha- and beta-tubulin heterodimers. Microtubules grow by the addition of GTP-tubulin dimers to the microtubule end, where a stabilizing cap forms. Below the cap, tubulin dimers are in GDP-bound state, owing to GTPase activity of alpha-tubulin. The sequence is that of Tubulin beta-9 chain (TUBB9) from Arabidopsis thaliana (Mouse-ear cress).